Here is a 646-residue protein sequence, read N- to C-terminus: mRNA 3'-end-processing protein RNA14 (646 aa).

6 HAT repeats span residues 46 to 78 (DDYDNSRKLYAELHERFPLYSPLWTMHLQSELQ), 80 to 114 (NEFDTVEKLLAQCLAGDLENNDLSLWSTYLDYVRR), 128 to 160 (VVIKAFKLVMDKCATFEPKASSFWNDYLGFLHQ), 171 to 204 (QRLDMIREVYKKMLCVPFDKLEKMWNQYTLWEQE), 249 to 281 (ANKNNIPQYVLPCKKNDHTQLEAWLKWIAWEKE), and 290 to 322 (ALKDRVTYVYKQAIQQLLFEPEIWYDYVMYEFD). Positions 571–599 (DGDPSGVDKSFKKRQIENDENLPDSKRQK) are disordered.

It localises to the nucleus. The protein localises to the cytoplasm. Component of the cleavage factor IA (CFIA) complex, which is involved in the endonucleolytic cleavage during polyadenylation-dependent pre-mRNA 3'-end formation. The chain is mRNA 3'-end-processing protein RNA14 (RNA14) from Candida glabrata (strain ATCC 2001 / BCRC 20586 / JCM 3761 / NBRC 0622 / NRRL Y-65 / CBS 138) (Yeast).